The following is a 507-amino-acid chain: Phosphoenolpyruvate carboxylase (507 aa).

Residues 1-25 form a disordered region; that stretch reads MHKIDRKIPNIMGTQHPDNAGVPFF.

Belongs to the PEPCase type 2 family. In terms of assembly, homotetramer. It depends on Mg(2+) as a cofactor.

It catalyses the reaction oxaloacetate + phosphate = phosphoenolpyruvate + hydrogencarbonate. Functionally, catalyzes the irreversible beta-carboxylation of phosphoenolpyruvate (PEP) to form oxaloacetate (OAA), a four-carbon dicarboxylic acid source for the tricarboxylic acid cycle. The chain is Phosphoenolpyruvate carboxylase from Oenococcus oeni (strain ATCC BAA-331 / PSU-1).